Consider the following 178-residue polypeptide: Large ribosomal subunit protein bL25 (178 aa).

The protein belongs to the bacterial ribosomal protein bL25 family. CTC subfamily. In terms of assembly, part of the 50S ribosomal subunit; part of the 5S rRNA/L5/L18/L25 subcomplex. Contacts the 5S rRNA. Binds to the 5S rRNA independently of L5 and L18.

In terms of biological role, this is one of the proteins that binds to the 5S RNA in the ribosome where it forms part of the central protuberance. This Campylobacter lari (strain RM2100 / D67 / ATCC BAA-1060) protein is Large ribosomal subunit protein bL25.